The chain runs to 449 residues: Baeyer-Villiger oxidase GME11358 (449 aa).

It belongs to the questin oxidase family.

Its pathway is secondary metabolite biosynthesis. Baeyer-Villiger oxidase; part of the gene cluster that mediates the biosynthesis of dibenzodioxocinones such as pestalotiollide B, a novel class of inhibitors against cholesterol ester transfer protein (CEPT). The biosynthesis initiates from condensation of acetate and malonate units catalyzed by the non-reducing PKS pks8/GME11356. Pks8/GME11356 lacks a thioesterase (TE) domain, which is important to the cyclizing of the third ring of atrochrysone carboxylic acid, and the esterase GME11355 might play the role of TE and catalyzes the cyclization reaction of the C ring. The lactamase-like protein GME11357 (or other beta-lactamases in Pestalotiopsis microspora) probably hydrolyzes the thioester bond between the ACP of pks8/GME11356 and the intermediate to release atrochrysone carboxylic acid, which is spontaneously dehydrates to form endocrocin anthrone. Endocrocin anthrone is further converted to emodin via the endocrocin intermediate. Emodin is then oxidized by several enzymes such as the Baeyer-Villiger oxidase GME11358, the oxidoreductase GME11367, the short chain dehydrogenase/reductase GME11373, as well as by other oxidoreductases from the cluster, to modify the A and C rings and open the B ring, and finally yield monodictyphenone. The prenyltransferase GME11375 may catalyze the addition reaction between the C5 side chains and the carbon bone of dibenzodioxocinones. The remaining biochemical reactions to the final product dibenzodioxocinones should be methylation catalyzed by methyltransferase GME11366 and reduction and lactonization reaction catalyzed by a series of oxidordeuctases. The protein is Baeyer-Villiger oxidase GME11358 of Pestalotiopsis microspora.